Here is a 596-residue protein sequence, read N- to C-terminus: Membrane protein insertase YidC (596 aa).

Transmembrane regions (helical) follow at residues 4–24 (NKLI…HFFD), 332–352 (LGWP…FSFI), 359–379 (YGLV…PLSY), 425–445 (LSGC…FNFF), 468–488 (IINL…FTLL), and 518–538 (PITF…YYFV). Residues 565–584 (KNKEKSANNKEGSFKKRFQD) are compositionally biased toward basic and acidic residues. Positions 565 to 596 (KNKEKSANNKEGSFKKRFQDAIKASASHKGKK) are disordered.

This sequence belongs to the OXA1/ALB3/YidC family. Type 1 subfamily. In terms of assembly, interacts with the Sec translocase complex via SecD. Specifically interacts with transmembrane segments of nascent integral membrane proteins during membrane integration.

It is found in the cell inner membrane. Functionally, required for the insertion and/or proper folding and/or complex formation of integral membrane proteins into the membrane. Involved in integration of membrane proteins that insert both dependently and independently of the Sec translocase complex, as well as at least some lipoproteins. Aids folding of multispanning membrane proteins. The chain is Membrane protein insertase YidC from Amoebophilus asiaticus (strain 5a2).